A 121-amino-acid polypeptide reads, in one-letter code: MARISGIDIPREKRVEVALTYIYGIGLTRAQSILEKSGVNPDIRVKDLEDSDIQKLRAVTEEFTLEGDLRRQEGMALKRLQDIGCVRGRRHRMSLPVRGQRTRTNARTRRGARKTVAGRKK.

Positions 97 to 121 (VRGQRTRTNARTRRGARKTVAGRKK) are disordered. The span at 100-121 (QRTRTNARTRRGARKTVAGRKK) shows a compositional bias: basic residues.

Belongs to the universal ribosomal protein uS13 family. As to quaternary structure, part of the 30S ribosomal subunit. Forms a loose heterodimer with protein S19. Forms two bridges to the 50S subunit in the 70S ribosome.

Located at the top of the head of the 30S subunit, it contacts several helices of the 16S rRNA. In the 70S ribosome it contacts the 23S rRNA (bridge B1a) and protein L5 of the 50S subunit (bridge B1b), connecting the 2 subunits; these bridges are implicated in subunit movement. Contacts the tRNAs in the A and P-sites. The protein is Small ribosomal subunit protein uS13 of Prochlorococcus marinus (strain NATL2A).